A 189-amino-acid polypeptide reads, in one-letter code: Phosphoheptose isomerase (189 aa).

The 156-residue stretch at 34–189 (LVAALKGGKK…CDLVEKGLFK (156 aa)) folds into the SIS domain. Residue 49 to 51 (NGG) coordinates substrate. Zn(2+)-binding residues include His-58 and Glu-62. Substrate-binding positions include Glu-62, 91–92 (ND), 117–119 (STS), Ser-122, and Gln-169. Zn(2+)-binding residues include Gln-169 and His-177.

The protein belongs to the SIS family. GmhA subfamily. As to quaternary structure, homotetramer. The cofactor is Zn(2+).

It is found in the cytoplasm. The catalysed reaction is 2 D-sedoheptulose 7-phosphate = D-glycero-alpha-D-manno-heptose 7-phosphate + D-glycero-beta-D-manno-heptose 7-phosphate. It functions in the pathway carbohydrate biosynthesis; D-glycero-D-manno-heptose 7-phosphate biosynthesis; D-glycero-alpha-D-manno-heptose 7-phosphate and D-glycero-beta-D-manno-heptose 7-phosphate from sedoheptulose 7-phosphate: step 1/1. Functionally, catalyzes the isomerization of sedoheptulose 7-phosphate in D-glycero-D-manno-heptose 7-phosphate. This chain is Phosphoheptose isomerase, found in Geobacter metallireducens (strain ATCC 53774 / DSM 7210 / GS-15).